We begin with the raw amino-acid sequence, 869 residues long: Speckle targeted PIP5K1A-regulated poly(A) polymerase (869 aa).

The Matrin-type zinc-finger motif lies at 16 to 46 (FRCCLCHVTTANRPSLDAHLGGRKHRHLVEL). Positions 56-128 (RSVFVSGFPR…HRLRVRPREQ (73 aa)) constitute an RRM domain. The segment at 111–147 (QPQHTLGGHRLRVRPREQKEFQSPASKSPKGAAPDSH) is disordered. S205 contacts ATP. Mg(2+)-binding residues include D216 and D218. 2 residues coordinate UTP: D216 and D218. Positions 252–315 (QALACTPASP…PASPLQEDRG (64 aa)) are disordered. Positions 259–269 (ASPPDSQPPSP) are enriched in pro residues. Over residues 279-290 (TPSSSLAPQTPD) the composition is skewed to polar residues. N391 serves as a coordination point for ATP. 4 residues coordinate UTP: N391, R413, Y431, and H548. The PAP-associated domain maps to 490-548 (LSSLLAQFFSCVSCWDLRGSLLSLREGQALPVAGDLPSNRWEGLRLGPMNLQDPFDLSH). The KA1; binds the bulging loops of U6 snRNA but is dispensable for terminal uridylyltransferase activity stretch occupies residues 597–869 (SSPSSLLSAT…VFLPQALRNL (273 aa)). Basic and acidic residues-rich tracts occupy residues 637–648 (GTKRLRSDRGGP) and 660–686 (LKLD…HSED). Disordered regions lie at residues 637-686 (GTKR…HSED) and 720-755 (LATG…TGRG). Phosphoserine occurs at positions 684 and 748.

Belongs to the DNA polymerase type-B-like family. As to quaternary structure, associates with the cleavage and polyadenylation specificity factor (CPSF) complex. Interacts with CPSF1 and CPSF3; the interaction is direct. Interacts with PIP5K1A. It depends on Mg(2+) as a cofactor. Mn(2+) is required as a cofactor. Post-translationally, phosphorylated by CK1 in the proline-rich (Pro-rich) region.

The protein resides in the nucleus. The protein localises to the nucleolus. Its subcellular location is the nucleus speckle. The enzyme catalyses RNA(n) + UTP = RNA(n)-3'-uridine ribonucleotide + diphosphate. It catalyses the reaction RNA(n) + ATP = RNA(n)-3'-adenine ribonucleotide + diphosphate. Adenylyltransferase activity is specifically phosphatidylinositol 4,5-bisphosphate (PtdIns(4,5)P2). Poly(A) polymerase that creates the 3'-poly(A) tail of specific pre-mRNAs. Localizes to nuclear speckles together with PIP5K1A and mediates polyadenylation of a select set of mRNAs, such as HMOX1. In addition to polyadenylation, it is also required for the 3'-end cleavage of pre-mRNAs: binds to the 3'UTR of targeted pre-mRNAs and promotes the recruitment and assembly of the CPSF complex on the 3'UTR of pre-mRNAs. In addition to adenylyltransferase activity, also has uridylyltransferase activity. However, the ATP ratio is higher than UTP in cells, suggesting that it functions primarily as a poly(A) polymerase. Acts as a specific terminal uridylyltransferase for U6 snRNA in vitro: responsible for a controlled elongation reaction that results in the restoration of the four 3'-terminal UMP-residues found in newly transcribed U6 snRNA. Not involved in replication-dependent histone mRNA degradation. This chain is Speckle targeted PIP5K1A-regulated poly(A) polymerase (TUT1), found in Ailuropoda melanoleuca (Giant panda).